Consider the following 251-residue polypeptide: Flap endonuclease Xni (251 aa).

Asp-104 is a binding site for Mg(2+). The 5'-3' exonuclease domain maps to 160-249 (VLPRQLPDYW…IDGNLQQLRL (90 aa)). Leu-171, Ala-172, Pro-180, Val-182, and Ile-185 together coordinate K(+). The interaction with DNA stretch occupies residues 184 to 189 (GIGPKS).

Belongs to the Xni family. The cofactor is Mg(2+). K(+) serves as cofactor.

Its function is as follows. Has flap endonuclease activity. During DNA replication, flap endonucleases cleave the 5'-overhanging flap structure that is generated by displacement synthesis when DNA polymerase encounters the 5'-end of a downstream Okazaki fragment. The protein is Flap endonuclease Xni of Salmonella dublin (strain CT_02021853).